The primary structure comprises 111 residues: Putative pterin-4-alpha-carbinolamine dehydratase (111 aa).

Belongs to the pterin-4-alpha-carbinolamine dehydratase family.

It carries out the reaction (4aS,6R)-4a-hydroxy-L-erythro-5,6,7,8-tetrahydrobiopterin = (6R)-L-erythro-6,7-dihydrobiopterin + H2O. The protein is Putative pterin-4-alpha-carbinolamine dehydratase of Marinobacter nauticus (strain ATCC 700491 / DSM 11845 / VT8) (Marinobacter aquaeolei).